Reading from the N-terminus, the 63-residue chain is Cytochrome c oxidase subunit 7C, mitochondrial (63 aa).

A mitochondrion-targeting transit peptide spans 1–16 (MLGHSIRRFTTSVVRR). The Mitochondrial matrix segment spans residues 17–33 (SHYEEGPGKNLPFSVEN). The residue at position 25 (K25) is an N6-acetyllysine; alternate. K25 is subject to N6-succinyllysine; alternate. Residues 34–60 (KWTLLVKMCLFFGSAFSVPFLIVRHQL) form a helical membrane-spanning segment. At 61-63 (LKQ) the chain is on the mitochondrial intermembrane side.

The protein belongs to the cytochrome c oxidase VIIc family. Component of the cytochrome c oxidase (complex IV, CIV), a multisubunit enzyme composed of 14 subunits. The complex is composed of a catalytic core of 3 subunits MT-CO1, MT-CO2 and MT-CO3, encoded in the mitochondrial DNA, and 11 supernumerary subunits COX4I, COX5A, COX5B, COX6A, COX6B, COX6C, COX7A, COX7B, COX7C, COX8 and NDUFA4, which are encoded in the nuclear genome. The complex exists as a monomer or a dimer and forms supercomplexes (SCs) in the inner mitochondrial membrane with NADH-ubiquinone oxidoreductase (complex I, CI) and ubiquinol-cytochrome c oxidoreductase (cytochrome b-c1 complex, complex III, CIII), resulting in different assemblies (supercomplex SCI(1)III(2)IV(1) and megacomplex MCI(2)III(2)IV(2)). Interacts with RAB5IF.

It localises to the mitochondrion inner membrane. The protein operates within energy metabolism; oxidative phosphorylation. In terms of biological role, component of the cytochrome c oxidase, the last enzyme in the mitochondrial electron transport chain which drives oxidative phosphorylation. The respiratory chain contains 3 multisubunit complexes succinate dehydrogenase (complex II, CII), ubiquinol-cytochrome c oxidoreductase (cytochrome b-c1 complex, complex III, CIII) and cytochrome c oxidase (complex IV, CIV), that cooperate to transfer electrons derived from NADH and succinate to molecular oxygen, creating an electrochemical gradient over the inner membrane that drives transmembrane transport and the ATP synthase. Cytochrome c oxidase is the component of the respiratory chain that catalyzes the reduction of oxygen to water. Electrons originating from reduced cytochrome c in the intermembrane space (IMS) are transferred via the dinuclear copper A center (CU(A)) of subunit 2 and heme A of subunit 1 to the active site in subunit 1, a binuclear center (BNC) formed by heme A3 and copper B (CU(B)). The BNC reduces molecular oxygen to 2 water molecules using 4 electrons from cytochrome c in the IMS and 4 protons from the mitochondrial matrix. In Macaca fascicularis (Crab-eating macaque), this protein is Cytochrome c oxidase subunit 7C, mitochondrial (COX7C).